A 151-amino-acid chain; its full sequence is Large ribosomal subunit protein uL22 (151 aa).

This sequence belongs to the universal ribosomal protein uL22 family. Part of the 50S ribosomal subunit.

Functionally, this protein binds specifically to 23S rRNA. It makes multiple contacts with different domains of the 23S rRNA in the assembled 50S subunit and ribosome. Its function is as follows. The globular domain of the protein is located near the polypeptide exit tunnel on the outside of the subunit, while an extended beta-hairpin is found that lines the wall of the exit tunnel in the center of the 70S ribosome. This chain is Large ribosomal subunit protein uL22, found in Methanococcoides burtonii (strain DSM 6242 / NBRC 107633 / OCM 468 / ACE-M).